The chain runs to 427 residues: MQKNITNVSDTEQQLEIILTAEEYQPEYDQQLEEARRSIKIKGFRQGHVPVGMLKKMIGPSLEAEVAEKMASKHFSAIADEEKINPASRAQIDSFNFGDGELTIKISYEIHPEFELKDLSAYSFTQAEYSVTDEDVEREIKLILKGHGTMVTIEEAAGEGDTLIGDVTKLDADGNAVENGKNENHHFNLEYLPADNPFRMALEGRKAGDSVEVNVEPKEEGGEAIRYRVDVKEVKRLELPELDDELVKEITQQRFENVTDFKADVKLQLQAHFTDKSEQDLLEAMSAKLIEEHPVPTPKAMVASFQNMLLENAKRQMGGQFPKSLNEAEFLETLKPNAEKHARWLLVSQKIAKENELNVTDEDIKAYAEKEAEKEPSLTVEQLVSTYMSTEFKDYIIDTILKEKIYDVIKSKVTITKEATPIPEHQG.

Residues 160–240 (GDTLIGDVTK…VKEVKRLELP (81 aa)) form the PPIase FKBP-type domain.

Belongs to the FKBP-type PPIase family. Tig subfamily.

It is found in the cytoplasm. It catalyses the reaction [protein]-peptidylproline (omega=180) = [protein]-peptidylproline (omega=0). Involved in protein export. Acts as a chaperone by maintaining the newly synthesized protein in an open conformation. Functions as a peptidyl-prolyl cis-trans isomerase. This is Trigger factor from Chlorobaculum parvum (strain DSM 263 / NCIMB 8327) (Chlorobium vibrioforme subsp. thiosulfatophilum).